The chain runs to 651 residues: Acetyl-coenzyme A synthetase (651 aa).

Residues 193–196 (RAGR), Thr313, and Asn337 each bind CoA. ATP contacts are provided by residues 389-391 (GEP), 413-418 (DTWWQT), Asp502, and Arg517. Ser525 contributes to the CoA binding site. Arg528 provides a ligand contact to ATP. Mg(2+) is bound by residues Val539, His541, and Val544. Arg586 is a CoA binding site. Lys611 carries the N6-acetyllysine modification.

Belongs to the ATP-dependent AMP-binding enzyme family. Requires Mg(2+) as cofactor. Acetylated. Deacetylation by the SIR2-homolog deacetylase activates the enzyme.

The enzyme catalyses acetate + ATP + CoA = acetyl-CoA + AMP + diphosphate. In terms of biological role, catalyzes the conversion of acetate into acetyl-CoA (AcCoA), an essential intermediate at the junction of anabolic and catabolic pathways. AcsA undergoes a two-step reaction. In the first half reaction, AcsA combines acetate with ATP to form acetyl-adenylate (AcAMP) intermediate. In the second half reaction, it can then transfer the acetyl group from AcAMP to the sulfhydryl group of CoA, forming the product AcCoA. This chain is Acetyl-coenzyme A synthetase, found in Shewanella denitrificans (strain OS217 / ATCC BAA-1090 / DSM 15013).